Here is a 1044-residue protein sequence, read N- to C-terminus: Isoleucine--tRNA ligase (1044 aa).

The 'HIGH' region motif lies at 48–58 (PFATGLPHFGH). The 'KMSKS' region motif lies at 594–598 (KMSKS). Lys597 lines the ATP pocket.

The protein belongs to the class-I aminoacyl-tRNA synthetase family. IleS type 2 subfamily. In terms of assembly, monomer. Requires Zn(2+) as cofactor.

It is found in the cytoplasm. It carries out the reaction tRNA(Ile) + L-isoleucine + ATP = L-isoleucyl-tRNA(Ile) + AMP + diphosphate. Its function is as follows. Catalyzes the attachment of isoleucine to tRNA(Ile). As IleRS can inadvertently accommodate and process structurally similar amino acids such as valine, to avoid such errors it has two additional distinct tRNA(Ile)-dependent editing activities. One activity is designated as 'pretransfer' editing and involves the hydrolysis of activated Val-AMP. The other activity is designated 'posttransfer' editing and involves deacylation of mischarged Val-tRNA(Ile). The chain is Isoleucine--tRNA ligase from Borrelia recurrentis (strain A1).